A 330-amino-acid polypeptide reads, in one-letter code: Protoheme IX farnesyltransferase (330 aa).

Helical transmembrane passes span 33–53, 54–74, 101–121, 126–146, 154–174, 180–200, 227–247, 250–270, and 308–328; these read VMTL…VDAD, PFLA…AGAL, VSNA…LMAL, LAAG…TMIL, IVIG…AATG, AVIL…ALAL, ILLY…TGLG, VYGA…WRIF, and VLFA…IPGV.

This sequence belongs to the UbiA prenyltransferase family. Protoheme IX farnesyltransferase subfamily. As to quaternary structure, interacts with CtaA.

Its subcellular location is the cell inner membrane. The catalysed reaction is heme b + (2E,6E)-farnesyl diphosphate + H2O = Fe(II)-heme o + diphosphate. The protein operates within porphyrin-containing compound metabolism; heme O biosynthesis; heme O from protoheme: step 1/1. Converts heme B (protoheme IX) to heme O by substitution of the vinyl group on carbon 2 of heme B porphyrin ring with a hydroxyethyl farnesyl side group. The sequence is that of Protoheme IX farnesyltransferase from Maricaulis maris (strain MCS10) (Caulobacter maris).